A 100-amino-acid polypeptide reads, in one-letter code: Small ribosomal subunit protein bS18 (100 aa).

The disordered stretch occupies residues 1-23 (MTFIRKPAGQAKPQKYSTDAYGR).

Belongs to the bacterial ribosomal protein bS18 family. In terms of assembly, part of the 30S ribosomal subunit. Forms a tight heterodimer with protein bS6.

In terms of biological role, binds as a heterodimer with protein bS6 to the central domain of the 16S rRNA, where it helps stabilize the platform of the 30S subunit. The polypeptide is Small ribosomal subunit protein bS18 (Endomicrobium trichonymphae).